The chain runs to 244 residues: ATP synthase subunit a, chloroplastic (244 aa).

Transmembrane regions (helical) follow at residues 35–55, 92–112, 131–151, 196–216, and 217–237; these read QVLI…VIAV, VPFI…GALL, INTT…AGLS, LVVV…VMFL, and GLFT…AYIG.

The protein belongs to the ATPase A chain family. As to quaternary structure, F-type ATPases have 2 components, CF(1) - the catalytic core - and CF(0) - the membrane proton channel. CF(1) has five subunits: alpha(3), beta(3), gamma(1), delta(1), epsilon(1). CF(0) has four main subunits: a, b, b' and c.

The protein localises to the plastid. It localises to the chloroplast thylakoid membrane. Key component of the proton channel; it plays a direct role in the translocation of protons across the membrane. The sequence is that of ATP synthase subunit a, chloroplastic from Gossypium hirsutum (Upland cotton).